The primary structure comprises 101 residues: Small ribosomal subunit protein uS14A (101 aa).

The segment at 47–66 is disordered; the sequence is ALASLPRDSNPNRVTNRCAL.

Belongs to the universal ribosomal protein uS14 family. Part of the 30S ribosomal subunit. Contacts proteins S3 and S10.

Its function is as follows. Binds 16S rRNA, required for the assembly of 30S particles and may also be responsible for determining the conformation of the 16S rRNA at the A site. In Myxococcus xanthus (strain DK1622), this protein is Small ribosomal subunit protein uS14A.